The primary structure comprises 216 residues: GTPase IMAP family member GIMD1 (216 aa).

The AIG1-type G domain maps to 5 to 216 (KMIINLAVLG…ENHFQVLSFT (212 aa)). Residues 14 to 22 (GKTQSGKSS), S35, and 147 to 149 (HAE) each bind GTP.

Belongs to the TRAFAC class TrmE-Era-EngA-EngB-Septin-like GTPase superfamily. AIG1/Toc34/Toc159-like paraseptin GTPase family. IAN subfamily.

In Rattus norvegicus (Rat), this protein is GTPase IMAP family member GIMD1 (Gimd1).